The sequence spans 66 residues: Beta-mammal toxin Cv2 (66 aa).

The LCN-type CS-alpha/beta domain maps to 1 to 66 (KEGYIVNHST…VWPLPKKTCN (66 aa)). 4 disulfides stabilise this stretch: Cys12–Cys65, Cys16–Cys41, Cys25–Cys46, and Cys29–Cys48.

Expressed by the venom gland.

It localises to the secreted. Its activity is regulated as follows. Is susceptible to be slightly neutralized by human antibodies scFvs 10FG2. Beta toxins bind voltage-independently at site-4 of sodium channels (Nav) and reduces peak current and shifts the voltage of activation toward more negative potentials thereby affecting sodium channel activation and promoting spontaneous and repetitive firing. This toxin is slightly toxic to mice. This Centruroides villegasi (Scorpion) protein is Beta-mammal toxin Cv2.